The chain runs to 364 residues: Methylthioribose-1-phosphate isomerase (364 aa).

Residues 53 to 55, arginine 90, and glutamine 203 each bind substrate; that span reads RGA. Aspartate 244 serves as the catalytic Proton donor. 254 to 255 lines the substrate pocket; it reads NK.

It belongs to the eIF-2B alpha/beta/delta subunits family. MtnA subfamily.

It catalyses the reaction 5-(methylsulfanyl)-alpha-D-ribose 1-phosphate = 5-(methylsulfanyl)-D-ribulose 1-phosphate. It functions in the pathway amino-acid biosynthesis; L-methionine biosynthesis via salvage pathway; L-methionine from S-methyl-5-thio-alpha-D-ribose 1-phosphate: step 1/6. Its function is as follows. Catalyzes the interconversion of methylthioribose-1-phosphate (MTR-1-P) into methylthioribulose-1-phosphate (MTRu-1-P). This is Methylthioribose-1-phosphate isomerase from Sinorhizobium medicae (strain WSM419) (Ensifer medicae).